The following is a 547-amino-acid chain: Sterol carrier protein 2 (547 aa).

Phosphoserine is present on Ser-3. Lys-132 carries the post-translational modification N6-acetyllysine; alternate. At Lys-132 the chain carries N6-succinyllysine; alternate. Lys-168 is modified (N6-succinyllysine). N6-acetyllysine occurs at positions 173 and 177. Position 183 is an N6-acetyllysine; alternate (Lys-183). At Lys-183 the chain carries N6-succinyllysine; alternate. Lys-282 is subject to N6-succinyllysine. N6-acetyllysine; alternate is present on residues Lys-341, Lys-432, Lys-438, Lys-443, and Lys-453. N6-succinyllysine; alternate occurs at positions 341, 432, 438, 443, and 453. The SCP2 domain occupies 433 to 543 (ANLVFKEIEK…KLQNLQLQPG (111 aa)). An N6-succinyllysine modification is found at Lys-464. Lys-470 carries the N6-acetyllysine; alternate modification. Lys-470 is modified (N6-succinyllysine; alternate). Lys-479 is modified (N6-succinyllysine). Lys-491 carries the N6-acetyllysine modification. 2 positions are modified to N6-succinyllysine: Lys-492 and Lys-511. Ser-516 is subject to Phosphoserine. Residues Lys-522 and Lys-534 each carry the N6-succinyllysine modification. The short motif at 545–547 (AKL) is the Microbody targeting signal element.

It in the N-terminal section; belongs to the thiolase-like superfamily. Thiolase family. As to quaternary structure, interacts with PEX5; the interaction is essential for peroxisomal import. PreSCP2, a protein with a molecular mass of about 15 kDa, is processed into its mature form (SCP2) by proteolytic cleavage of a 20 residue leader sequence after translocation into peroxisomes. As to expression, liver, fibroblasts, and placenta.

It is found in the peroxisome. It localises to the cytoplasm. Its subcellular location is the mitochondrion. The protein resides in the endoplasmic reticulum. The enzyme catalyses choloyl-CoA + propanoyl-CoA = 3alpha,7alpha,12alpha-trihydroxy-24-oxo-5beta-cholestan-26-oyl-CoA + CoA. It carries out the reaction 4,8,12-trimethyltridecanoyl-CoA + propanoyl-CoA = 3-oxopristanoyl-CoA + CoA. The catalysed reaction is an acyl-CoA + acetyl-CoA = a 3-oxoacyl-CoA + CoA. It catalyses the reaction hexanoyl-CoA + acetyl-CoA = 3-oxooctanoyl-CoA + CoA. The enzyme catalyses tetradecanoyl-CoA + acetyl-CoA = 3-oxohexadecanoyl-CoA + CoA. It carries out the reaction 3-oxohexadecanedioyl-CoA + CoA = tetradecanedioyl-CoA + acetyl-CoA. The catalysed reaction is propanoyl-CoA + tetradecanoyl-CoA = 3-oxo-2-methylhexadecanoyl-CoA + CoA. It catalyses the reaction butanoyl-CoA + acetyl-CoA = 3-oxohexanoyl-CoA + CoA. The enzyme catalyses octanoyl-CoA + acetyl-CoA = 3-oxodecanoyl-CoA + CoA. It carries out the reaction decanoyl-CoA + acetyl-CoA = 3-oxododecanoyl-CoA + CoA. The catalysed reaction is dodecanoyl-CoA + acetyl-CoA = 3-oxotetradecanoyl-CoA + CoA. It catalyses the reaction hexadecanoyl-CoA + acetyl-CoA = 3-oxooctadecanoyl-CoA + CoA. The enzyme catalyses 3-oxo-(9Z-octadecenoyl)-CoA + CoA = (7Z)-hexadecenoyl-CoA + acetyl-CoA. It carries out the reaction 7-dehydrocholesterol(in) = 7-dehydrocholesterol(out). In terms of biological role, plays a crucial role in the peroxisomal oxidation of branched-chain fatty acids. Catalyzes the last step of the peroxisomal beta-oxidation of branched chain fatty acids and the side chain of the bile acid intermediates di- and trihydroxycoprostanic acids (DHCA and THCA). Also active with medium and long straight chain 3-oxoacyl-CoAs. Stimulates the microsomal conversion of 7-dehydrocholesterol to cholesterol and transfers phosphatidylcholine and 7-dehydrocholesterol between membrances, in vitro. Isoforms SCP2 and SCPx cooperate in peroxisomal oxidation of certain naturally occurring tetramethyl-branched fatty acyl-CoAs. Functionally, mediates the transfer of all common phospholipids, cholesterol and gangliosides from the endoplasmic reticulum to the plasma membrane. May play a role in regulating steroidogenesis. Stimulates the microsomal conversion of 7-dehydrocholesterol to cholesterol. Also binds fatty acids and fatty acyl Coenzyme A (CoA) such as phytanoyl-CoA. Involved in the regulation phospholipid synthesis in endoplasmic reticulum enhancing the incorporation of exogenous fatty acid into glycerides. Seems to stimulate the rate-limiting step in phosphatidic acid formation mediated by GPAT3. Isoforms SCP2 and SCPx cooperate in peroxisomal oxidation of certain naturally occurring tetramethyl-branched fatty acyl-CoAs. This is Sterol carrier protein 2 from Homo sapiens (Human).